The primary structure comprises 143 residues: MNTYTVKASDIKRDWHVIDASGRVLGEVAAEAAKYLMGKHKPMFCRNLDCGDYVVIINAKKVTVTGNKLDQKIYYRHSGFPGGFRQEKLGDLLKTKPLFVIEHAVKGMIPRNTLGAQILAKLKVYEGEEHPHASQTGEVSKES.

This sequence belongs to the universal ribosomal protein uL13 family. In terms of assembly, part of the 50S ribosomal subunit.

Its function is as follows. This protein is one of the early assembly proteins of the 50S ribosomal subunit, although it is not seen to bind rRNA by itself. It is important during the early stages of 50S assembly. In Dehalococcoides mccartyi (strain ATCC BAA-2266 / KCTC 15142 / 195) (Dehalococcoides ethenogenes (strain 195)), this protein is Large ribosomal subunit protein uL13.